We begin with the raw amino-acid sequence, 366 residues long: Ribosomal RNA large subunit methyltransferase M (366 aa).

S-adenosyl-L-methionine is bound by residues Ser-188, 221-224 (CPGG), Asp-240, Asp-260, and Asp-277. The Proton acceptor role is filled by Lys-306.

The protein belongs to the class I-like SAM-binding methyltransferase superfamily. RNA methyltransferase RlmE family. RlmM subfamily. Monomer.

It is found in the cytoplasm. The catalysed reaction is cytidine(2498) in 23S rRNA + S-adenosyl-L-methionine = 2'-O-methylcytidine(2498) in 23S rRNA + S-adenosyl-L-homocysteine + H(+). Its function is as follows. Catalyzes the 2'-O-methylation at nucleotide C2498 in 23S rRNA. The polypeptide is Ribosomal RNA large subunit methyltransferase M (Shigella flexneri serotype 5b (strain 8401)).